A 305-amino-acid chain; its full sequence is UDP-3-O-acyl-N-acetylglucosamine deacetylase (305 aa).

Residues H79, H238, and D242 each contribute to the Zn(2+) site. H265 serves as the catalytic Proton donor.

The protein belongs to the LpxC family. Zn(2+) is required as a cofactor.

The catalysed reaction is a UDP-3-O-[(3R)-3-hydroxyacyl]-N-acetyl-alpha-D-glucosamine + H2O = a UDP-3-O-[(3R)-3-hydroxyacyl]-alpha-D-glucosamine + acetate. It participates in glycolipid biosynthesis; lipid IV(A) biosynthesis; lipid IV(A) from (3R)-3-hydroxytetradecanoyl-[acyl-carrier-protein] and UDP-N-acetyl-alpha-D-glucosamine: step 2/6. In terms of biological role, catalyzes the hydrolysis of UDP-3-O-myristoyl-N-acetylglucosamine to form UDP-3-O-myristoylglucosamine and acetate, the committed step in lipid A biosynthesis. The sequence is that of UDP-3-O-acyl-N-acetylglucosamine deacetylase from Vibrio atlanticus (strain LGP32) (Vibrio splendidus (strain Mel32)).